The chain runs to 649 residues: ENTH domain-containing protein C19F8.03c (649 aa).

Residues 2-136 enclose the ENTH domain; sequence SPSKWLLTYE…VDYAQVGDAP (135 aa). Disordered stretches follow at residues 280–382, 409–440, and 590–649; these read YLQN…NELE, LSAE…PNDS, and FTHG…PFRS. Phosphoserine occurs at positions 285 and 287. A compositionally biased stretch (basic residues) spans 299–308; it reads PTLRKKKSIP. 2 stretches are compositionally biased toward polar residues: residues 313-326 and 340-349; these read ESSS…TVQQ and PETQRTTSRI. The segment covering 352–381 has biased composition (acidic residues); sequence QEEEIKEEEMEGEEEEEEEEVPNYESENEL. Polar residues-rich tracts occupy residues 409–418, 614–624, and 635–649; these read LSAEGTSASP, TPYTASKNPFS, and ARNS…PFRS. Position 414 is a phosphothreonine (Thr414). The residue at position 417 (Ser417) is a Phosphoserine.

The protein resides in the cytoplasm. The chain is ENTH domain-containing protein C19F8.03c from Schizosaccharomyces pombe (strain 972 / ATCC 24843) (Fission yeast).